We begin with the raw amino-acid sequence, 890 residues long: DNA mismatch repair protein MutS (890 aa).

Residue glycine 607 to serine 614 participates in ATP binding.

The protein belongs to the DNA mismatch repair MutS family.

This protein is involved in the repair of mismatches in DNA. It is possible that it carries out the mismatch recognition step. This protein has a weak ATPase activity. The sequence is that of DNA mismatch repair protein MutS from Bacillus thuringiensis subsp. konkukian (strain 97-27).